We begin with the raw amino-acid sequence, 511 residues long: Coatomer subunit delta (511 aa).

Residues 168–177 (QARRDAERQG) show a composition bias toward basic and acidic residues. A disordered region spans residues 168 to 188 (QARRDAERQGKKAPGFGGFGS). A Phosphoserine modification is found at Ser-223. Residues Lys-233 and Lys-241 each carry the N6-acetyllysine modification. Ser-244 is subject to Phosphoserine. One can recognise an MHD domain in the interval 271-511 (MESVHMKIEE…TFLVDKYEIL (241 aa)). Residues Lys-309 and Lys-351 each carry the N6-acetyllysine modification. Ser-493 bears the Phosphoserine mark.

The protein belongs to the adaptor complexes medium subunit family. Delta-COP subfamily. In terms of assembly, oligomeric complex that consists of at least the alpha, beta, beta', gamma, delta, epsilon and zeta subunits. As to expression, ubiquitously expressed.

The protein localises to the cytoplasm. It localises to the golgi apparatus membrane. The protein resides in the cytoplasmic vesicle. Its subcellular location is the COPI-coated vesicle membrane. Its function is as follows. Component of the coatomer, a cytosolic protein complex that binds to dilysine motifs and reversibly associates with Golgi non-clathrin-coated vesicles, which further mediate biosynthetic protein transport from the ER, via the Golgi up to the trans Golgi network. The coatomer complex is required for budding from Golgi membranes, and is essential for the retrograde Golgi-to-ER transport of dilysine-tagged proteins. In mammals, the coatomer can only be recruited by membranes associated to ADP-ribosylation factors (ARFs), which are small GTP-binding proteins; the complex also influences the Golgi structural integrity, as well as the processing, activity, and endocytic recycling of LDL receptors. In Homo sapiens (Human), this protein is Coatomer subunit delta (ARCN1).